We begin with the raw amino-acid sequence, 263 residues long: Probable adenylate kinase 7, mitochondrial (263 aa).

A mitochondrion-targeting transit peptide spans 1–30 (MAWLSRVRGVSPVTRLAAIRRSFGSAAALE). 72–77 (GAWRHV) contributes to the ATP binding site. The interval 92–121 (SMGSLVRQELNPRSSLYKEIASAVNERKLV) is NMP. Residues R98, 119-121 (KLV), 149-152 (GIPR), Q156, and R206 each bind AMP. G234 contacts ATP.

It belongs to the adenylate kinase family. In terms of assembly, monomer.

The protein resides in the mitochondrion. The enzyme catalyses AMP + ATP = 2 ADP. Functionally, catalyzes the reversible transfer of the terminal phosphate group between ATP and AMP. Plays an important role in cellular energy homeostasis and in adenine nucleotide metabolism. The polypeptide is Probable adenylate kinase 7, mitochondrial (Arabidopsis thaliana (Mouse-ear cress)).